A 339-amino-acid chain; its full sequence is Glyceraldehyde-3-phosphate dehydrogenase (339 aa).

Residues 13 to 14 (RI), Asp35, and Lys84 contribute to the NAD(+) site. D-glyceraldehyde 3-phosphate is bound by residues 156–158 (SCT), Thr187, 216–217 (TG), and Arg239. Cys157 acts as the Nucleophile in catalysis. Asn321 is a binding site for NAD(+).

This sequence belongs to the glyceraldehyde-3-phosphate dehydrogenase family. As to quaternary structure, homotetramer.

It localises to the cytoplasm. It catalyses the reaction D-glyceraldehyde 3-phosphate + phosphate + NAD(+) = (2R)-3-phospho-glyceroyl phosphate + NADH + H(+). It participates in carbohydrate degradation; glycolysis; pyruvate from D-glyceraldehyde 3-phosphate: step 1/5. This is Glyceraldehyde-3-phosphate dehydrogenase (G3PD) from Brugia malayi (Filarial nematode worm).